The following is a 366-amino-acid chain: tRNA/tmRNA (uracil-C(5))-methyltransferase (366 aa).

S-adenosyl-L-methionine contacts are provided by Gln-190, Tyr-218, Asn-223, Glu-239, and Asp-299. Residue Cys-324 is the Nucleophile of the active site. Glu-358 acts as the Proton acceptor in catalysis.

It belongs to the class I-like SAM-binding methyltransferase superfamily. RNA M5U methyltransferase family. TrmA subfamily.

It catalyses the reaction uridine(54) in tRNA + S-adenosyl-L-methionine = 5-methyluridine(54) in tRNA + S-adenosyl-L-homocysteine + H(+). The enzyme catalyses uridine(341) in tmRNA + S-adenosyl-L-methionine = 5-methyluridine(341) in tmRNA + S-adenosyl-L-homocysteine + H(+). Functionally, dual-specificity methyltransferase that catalyzes the formation of 5-methyluridine at position 54 (m5U54) in all tRNAs, and that of position 341 (m5U341) in tmRNA (transfer-mRNA). The polypeptide is tRNA/tmRNA (uracil-C(5))-methyltransferase (Escherichia coli O17:K52:H18 (strain UMN026 / ExPEC)).